The primary structure comprises 365 residues: Green-sensitive opsin P521 (365 aa).

The Extracellular portion of the chain corresponds to 1-51; that stretch reads MTEAWNVAVFAARRSRDDDDTTRGSVFTYTNTNNTRGPFEGPNYHIAPRWV. An N-linked (GlcNAc...) asparagine glycan is attached at N33. Residues 52–76 traverse the membrane as a helical segment; the sequence is YNLVSFFMIIVVIASCFTNGLVLVA. The Cytoplasmic segment spans residues 77–88; that stretch reads TAKFKKLRHPLN. Residues 89-113 form a helical membrane-spanning segment; it reads WILVNLAFVDLVETLVASTISVFNQ. Topologically, residues 114 to 128 are extracellular; that stretch reads IFGYFILGHPLCVIE. C125 and C202 are disulfide-bonded. A helical membrane pass occupies residues 129–148; sequence GYVVSSCGITGLWSLAIISW. The Cytoplasmic portion of the chain corresponds to 149-167; it reads ERWFVVCKPFGNIKFDSKL. A helical membrane pass occupies residues 168–191; that stretch reads AIIGIVFSWVWAWGWSAPPIFGWS. The Extracellular segment spans residues 192 to 217; that stretch reads RYWPHGLKTSCGPDVFSGSVELGCQS. A helical transmembrane segment spans residues 218-245; that stretch reads FMLTLMITCCFLPLFIIIVCYLQVWMAI. Residues 246–267 lie on the Cytoplasmic side of the membrane; sequence RAVAAQQKESESTQKAEREVSR. The chain crosses the membrane as a helical span at residues 268-291; sequence MVVVMIVAFCICWGPYASFVSFAA. Topologically, residues 292–299 are extracellular; the sequence is ANPGYAFH. A helical transmembrane segment spans residues 300 to 324; that stretch reads PLAAALPAYFAKSATIYNPVIYVFM. Position 311 is an N6-(retinylidene)lysine (K311). Over 325 to 365 the chain is Cytoplasmic; it reads NRQFRNCIMQLFGKKVDDGSEASTTSRTEVSSVSNSSVAPA. Residues 342–365 form a disordered region; it reads DGSEASTTSRTEVSSVSNSSVAPA. Residues 345-365 are compositionally biased toward low complexity; the sequence is EASTTSRTEVSSVSNSSVAPA.

Belongs to the G-protein coupled receptor 1 family. Opsin subfamily. In terms of processing, phosphorylated on some or all of the serine and threonine residues present in the C-terminal region. As to expression, in this lizard the color pigments are found in the rod-shaped photoreceptor cells which have been derived from ancestral cone-like photoreceptors.

It is found in the membrane. In terms of biological role, visual pigments are the light-absorbing molecules that mediate vision. They consist of an apoprotein, opsin, covalently linked to cis-retinal. This is Green-sensitive opsin P521 from Gekko gecko (Tokay gecko).